Here is a 558-residue protein sequence, read N- to C-terminus: Formate--tetrahydrofolate ligase (558 aa).

66-73 lines the ATP pocket; sequence TPAGEGKT.

This sequence belongs to the formate--tetrahydrofolate ligase family.

The catalysed reaction is (6S)-5,6,7,8-tetrahydrofolate + formate + ATP = (6R)-10-formyltetrahydrofolate + ADP + phosphate. It functions in the pathway one-carbon metabolism; tetrahydrofolate interconversion. The polypeptide is Formate--tetrahydrofolate ligase (Neisseria meningitidis serogroup C / serotype 2a (strain ATCC 700532 / DSM 15464 / FAM18)).